The primary structure comprises 197 residues: MYB-like transcription factor EOBII (197 aa).

2 HTH myb-type domains span residues 10–62 (DAEV…LNYL) and 63–117 (RPDV…QKHI). 2 consecutive DNA-binding regions (H-T-H motif) follow at residues 38-62 (WNSLAKSAGLKRTGKSCRLRWLNYL) and 90-113 (WSKIAKHLPGRTDNEIKNYWRTRI). The tract at residues 125–158 (GQAASSEQNDHQEACTSQMSNGPNDNTIDQTYSP) is disordered. A compositionally biased stretch (polar residues) spans 138-158 (ACTSQMSNGPNDNTIDQTYSP).

Specifically expressed in flowers, mostly in stigmas, petal tubes and petal limbs, and, to a lower extent, in anthers and stamen. Also present at low levels in roots, stems, leaves and sepals.

It localises to the nucleus. Functionally, MYB-type transcription factor controlling the production of volatile organic compounds (VOCs), including floral volatile benzenoids and phenylpropanoids (FVBP), in flowers of fragrant cultivars (e.g. cv. Mitchell and cv. V26) by regulating the expression of ODO1 and EOBI, key regulators of the shikimate pathway, and of several biosynthetic floral scent-related genes including IGS, PAL2 and CFAT. This scent, mostly produced in the evening and night by the petals, attracts the pollinators (e.g. the night-active hawkmoth pollinator Manduca sexta). Binds to and activates the ODO1 and EOBI promoters via MYB binding sites (MBS) 5'-AAACCTAAT-3' and 5'-CTAACT-3'. Regulates the promoters of IGS1, CFAT and PAL2. Controls flowers petal opening by modulating a global transcriptomic switch. This Petunia hybrida (Petunia) protein is MYB-like transcription factor EOBII.